A 93-amino-acid polypeptide reads, in one-letter code: MSTTFDKVAKIIADTSEIDIDTITPESHTIDDLGIDSLDFLDIVFAIDKEFGIKVPLEKWTQEVNDGKASTDDYFVMKNLCAKIDALVAAKTA.

The 87-residue stretch at 2-88 (STTFDKVAKI…NLCAKIDALV (87 aa)) folds into the Carrier domain. S37 carries the post-translational modification O-(pantetheine 4'-phosphoryl)serine.

4'-phosphopantetheine is transferred from CoA to a specific serine of apo-ACP by AcpS. This modification is essential for activity because fatty acids are bound in thioester linkage to the sulfhydryl of the prosthetic group.

The protein resides in the cytoplasm. It participates in glycolipid biosynthesis; KDO(2)-lipid A biosynthesis. Its function is as follows. Carrier of the growing fatty acid chain in fatty acid biosynthesis. Is involved in the transfer of long hydroxylated fatty acids to lipid A. The polypeptide is Acyl carrier protein AcpXL (acpXL) (Mesorhizobium japonicum (strain LMG 29417 / CECT 9101 / MAFF 303099) (Mesorhizobium loti (strain MAFF 303099))).